Here is a 414-residue protein sequence, read N- to C-terminus: Serine/threonine transporter SstT (414 aa).

Helical transmembrane passes span G16 to S36, L46 to V66, I84 to F104, A143 to L163, A180 to V200, L219 to F239, M300 to V320, and V332 to I352.

The protein belongs to the dicarboxylate/amino acid:cation symporter (DAACS) (TC 2.A.23) family.

Its subcellular location is the cell inner membrane. It catalyses the reaction L-serine(in) + Na(+)(in) = L-serine(out) + Na(+)(out). It carries out the reaction L-threonine(in) + Na(+)(in) = L-threonine(out) + Na(+)(out). Involved in the import of serine and threonine into the cell, with the concomitant import of sodium (symport system). The chain is Serine/threonine transporter SstT from Salmonella newport (strain SL254).